Reading from the N-terminus, the 142-residue chain is Transcription antitermination protein NusB (142 aa).

The protein belongs to the NusB family.

Its function is as follows. Involved in transcription antitermination. Required for transcription of ribosomal RNA (rRNA) genes. Binds specifically to the boxA antiterminator sequence of the ribosomal RNA (rrn) operons. In Borreliella burgdorferi (strain ATCC 35210 / DSM 4680 / CIP 102532 / B31) (Borrelia burgdorferi), this protein is Transcription antitermination protein NusB.